The chain runs to 256 residues: Flap endonuclease Xni (256 aa).

Aspartate 105 is a Mg(2+) binding site. The 5'-3' exonuclease domain occupies 163-256 (RSQLIDYLAL…QFRIKKPDSE (94 aa)). Residues leucine 172, alanine 173, proline 181, valine 183, and isoleucine 186 each contribute to the K(+) site. The interaction with DNA stretch occupies residues 185-190 (GIGPKS).

The protein belongs to the Xni family. The cofactor is Mg(2+). K(+) is required as a cofactor.

Has flap endonuclease activity. During DNA replication, flap endonucleases cleave the 5'-overhanging flap structure that is generated by displacement synthesis when DNA polymerase encounters the 5'-end of a downstream Okazaki fragment. This chain is Flap endonuclease Xni, found in Shewanella pealeana (strain ATCC 700345 / ANG-SQ1).